The primary structure comprises 185 residues: piRNA-mediated silencing protein C19orf84 homolog (185 aa).

Disordered regions lie at residues 1–38 (MDEL…PSLL) and 93–185 (HIWP…EADY). Polar residues predominate over residues 11–25 (NGDNLSLPSAGTESW). The span at 26-38 (PTSATPGLPPSLL) shows a compositional bias: low complexity. Residues 118–130 (RPSRGWGRGRGRG) are compositionally biased toward basic residues. A compositionally biased stretch (basic and acidic residues) spans 139–150 (GPERAEERERNM).

As to quaternary structure, interacts with SPOCD1.

Its subcellular location is the nucleus. The protein resides in the nucleoplasm. In terms of biological role, protein adapter involved in piRNA-directed transposon methylation by connecting PIWIL4-piRNA and DNA methylation machineries. The PIWIL4-piRNA pathway plays a central role during spermatogenesis by directing transposon DNA methylation and silencing, thereby preventing their mobilization, which is essential for the germline integrity. The protein is piRNA-mediated silencing protein C19orf84 homolog of Mus musculus (Mouse).